The sequence spans 141 residues: Large ribosomal subunit protein uL14 (141 aa).

The protein belongs to the universal ribosomal protein uL14 family.

In Tetrahymena thermophila (strain SB210), this protein is Large ribosomal subunit protein uL14 (RPL23).